A 149-amino-acid chain; its full sequence is Large ribosomal subunit protein uL30 (149 aa).

The protein belongs to the universal ribosomal protein uL30 family. As to quaternary structure, part of the 50S ribosomal subunit.

This chain is Large ribosomal subunit protein uL30, found in Methanopyrus kandleri (strain AV19 / DSM 6324 / JCM 9639 / NBRC 100938).